Here is a 229-residue protein sequence, read N- to C-terminus: Probable endo-1,4-beta-xylanase A (229 aa).

Positions 1–18 (MVSFKYLFLAASALGALA) are cleaved as a signal peptide. N-linked (GlcNAc...) asparagine glycosylation is found at Asn30 and Asn100. The GH11 domain occupies 41–229 (AGTPSSTGWN…SSGSSSITVY (189 aa)). Glu125 (nucleophile) is an active-site residue. Glu216 functions as the Proton donor in the catalytic mechanism.

Belongs to the glycosyl hydrolase 11 (cellulase G) family.

The protein localises to the secreted. It carries out the reaction Endohydrolysis of (1-&gt;4)-beta-D-xylosidic linkages in xylans.. Its pathway is glycan degradation; xylan degradation. In terms of biological role, endo-1,4-beta-xylanase involved in the hydrolysis of xylan, a major structural heterogeneous polysaccharide found in plant biomass representing the second most abundant polysaccharide in the biosphere, after cellulose. The sequence is that of Probable endo-1,4-beta-xylanase A (xlnA) from Aspergillus clavatus (strain ATCC 1007 / CBS 513.65 / DSM 816 / NCTC 3887 / NRRL 1 / QM 1276 / 107).